A 444-amino-acid chain; its full sequence is MPPIVAIVGRPNVGKSTLFNRLTRGRRAITHDLPGVTRDRLEAPAEIEGRFVTLVDTGGMDYEAEESLARQIVEQAEAALVTADVVLFLVDGKAGRTALEDDLAERLRRLGKPVIVAVNKVDGLERVAAMTADFHAWGLPLLAISAAHGQGMAELAEAIAERLPEAEPYDPDAPLVQTVLRLAVLGRPNAGKSSLINALVGESRLIVSDIAGTTRDAVDVVVHQKGKRYLFVDTAGVRKRTRITDGLERYSVAKALSSAKRADVAVVVIDATGGVGVQDKRLISFLDSERKAFLVAVNKTDLVPQKDMLALQKDIARELRMCSHVPVLYMSAAKGKGVAKVLPQAEAIWAECQIRIGTGELNRAMRASLDKHQPPLVNGRRAKFYYLTQAADAPPTFVFFVSDTERVRDSYIKYLENSLRKLFGIATAPVKVVCRASHKPKDER.

2 EngA-type G domains span residues proline 3 to glutamate 167 and leucine 180 to glutamine 353. GTP contacts are provided by residues glycine 9–serine 16, aspartate 56–methionine 60, asparagine 119–aspartate 122, glycine 186–serine 193, aspartate 233–valine 237, and asparagine 298–aspartate 301. Residues isoleucine 354–histidine 438 enclose the KH-like domain.

It belongs to the TRAFAC class TrmE-Era-EngA-EngB-Septin-like GTPase superfamily. EngA (Der) GTPase family. Associates with the 50S ribosomal subunit.

GTPase that plays an essential role in the late steps of ribosome biogenesis. This Solidesulfovibrio magneticus (strain ATCC 700980 / DSM 13731 / RS-1) (Desulfovibrio magneticus) protein is GTPase Der.